The following is a 967-amino-acid chain: RNA polymerase-associated protein RapA (967 aa).

In terms of domain architecture, Helicase ATP-binding spans 163–337 (EVGQRTAPRV…FARLSLLDPD (175 aa)). 176-183 (DEVGLGKT) provides a ligand contact to ATP. The DEAH box signature appears at 283-286 (DEAH). The Helicase C-terminal domain maps to 489–660 (RLEWLITFLK…KFLQNPTALE (172 aa)).

It belongs to the SNF2/RAD54 helicase family. RapA subfamily. As to quaternary structure, interacts with the RNAP. Has a higher affinity for the core RNAP than for the holoenzyme. Its ATPase activity is stimulated by binding to RNAP.

Functionally, transcription regulator that activates transcription by stimulating RNA polymerase (RNAP) recycling in case of stress conditions such as supercoiled DNA or high salt concentrations. Probably acts by releasing the RNAP, when it is trapped or immobilized on tightly supercoiled DNA. Does not activate transcription on linear DNA. Probably not involved in DNA repair. The polypeptide is RNA polymerase-associated protein RapA (Pasteurella multocida (strain Pm70)).